Reading from the N-terminus, the 264-residue chain is Thiazole synthase (264 aa).

Residue lysine 98 is the Schiff-base intermediate with DXP of the active site. 1-deoxy-D-xylulose 5-phosphate contacts are provided by residues glycine 159, 185 to 186, and 207 to 208; these read AG and AT.

This sequence belongs to the ThiG family. Homotetramer. Forms heterodimers with either ThiH or ThiS.

It localises to the cytoplasm. The enzyme catalyses [ThiS sulfur-carrier protein]-C-terminal-Gly-aminoethanethioate + 2-iminoacetate + 1-deoxy-D-xylulose 5-phosphate = [ThiS sulfur-carrier protein]-C-terminal Gly-Gly + 2-[(2R,5Z)-2-carboxy-4-methylthiazol-5(2H)-ylidene]ethyl phosphate + 2 H2O + H(+). The protein operates within cofactor biosynthesis; thiamine diphosphate biosynthesis. Catalyzes the rearrangement of 1-deoxy-D-xylulose 5-phosphate (DXP) to produce the thiazole phosphate moiety of thiamine. Sulfur is provided by the thiocarboxylate moiety of the carrier protein ThiS. In vitro, sulfur can be provided by H(2)S. The chain is Thiazole synthase from Mycobacterium marinum (strain ATCC BAA-535 / M).